A 328-amino-acid polypeptide reads, in one-letter code: DNA-directed RNA polymerase subunit alpha (328 aa).

Residues 1–230 (MNKIKITPSV…QSQMEIFTND (230 aa)) form an alpha N-terminal domain (alpha-NTD) region. An alpha C-terminal domain (alpha-CTD) region spans residues 243–328 (NSEIFYQPLD…ILKKIEQNKS (86 aa)).

This sequence belongs to the RNA polymerase alpha chain family. In terms of assembly, homodimer. The RNAP catalytic core consists of 2 alpha, 1 beta, 1 beta' and 1 omega subunit. When a sigma factor is associated with the core the holoenzyme is formed, which can initiate transcription.

The catalysed reaction is RNA(n) + a ribonucleoside 5'-triphosphate = RNA(n+1) + diphosphate. Functionally, DNA-dependent RNA polymerase catalyzes the transcription of DNA into RNA using the four ribonucleoside triphosphates as substrates. This chain is DNA-directed RNA polymerase subunit alpha, found in Nitratiruptor sp. (strain SB155-2).